The primary structure comprises 714 residues: MIKKYEYDLCGKKIEVTIGKVAEQANGACLIQSGETVLLVTAVGSKEPREGVDFFPLTCDFEEKLYSVGKIPGGFIKREGRPSEKATLTARLIDRPLRPLFPEGYHNDVQVIATALSVDQDNTPDILAMIGSSIALSISDIPFLGPTGSVAVGMIDGEFIINPTKEQREKSDLELTVAGTKDAIMMVEAGCNNITEQQVLKAILRAHEEIKKICEFIESIQKECGKPKQEFIQPEKNIELDEEVKSFCIEDLKKITVNEDKLDREDHINTLKRSVVDYFVEKYDESIASKVSTIYDDLEKSEVRRLILEDYIRPDNRKLDQIREITCDVDILPRPHGSGLFKRGQTQVLSVTTLGTPSDAQVLDGLIEQEDKRYMHQYNFPPYSVGDARPLRSPGRREIGHGALAERALLPVIPSEEEFPYTIRVVSEVLSSNGSSSQASVCGSTLSLLDAGVPIKEPVAGIAMGLIKEDDNVVILSDIQGLEDHLGDMDFKVAGTKDGITALQMDIKITGISEEILTEALERARVGRLHILSLMNECISEPNKEISKYAPRIMVINIAPEKVREVIGPGGKVINKIIDETGVKIDTEDDGKITVAGENTESAQRAIDMIKEIVREPEIGEKYLGRVTKIMNFGAFVEILPGKEGLLHISNIAHERTNKVEDVLKENDEIMVKLMDIDDQGKMTLSRKALLPKPERKEKKNFDKKSEDQNSEDK.

Mg(2+) is bound by residues Asp-484 and Asp-490. The 60-residue stretch at 551 to 610 (PRIMVINIAPEKVREVIGPGGKVINKIIDETGVKIDTEDDGKITVAGENTESAQRAIDMI) folds into the KH domain. Residues 620–688 (GEKYLGRVTK…DQGKMTLSRK (69 aa)) form the S1 motif domain. The disordered stretch occupies residues 685-714 (LSRKALLPKPERKEKKNFDKKSEDQNSEDK). The span at 693 to 714 (KPERKEKKNFDKKSEDQNSEDK) shows a compositional bias: basic and acidic residues.

It belongs to the polyribonucleotide nucleotidyltransferase family. Mg(2+) serves as cofactor.

It is found in the cytoplasm. The enzyme catalyses RNA(n+1) + phosphate = RNA(n) + a ribonucleoside 5'-diphosphate. Involved in mRNA degradation. Catalyzes the phosphorolysis of single-stranded polyribonucleotides processively in the 3'- to 5'-direction. The protein is Polyribonucleotide nucleotidyltransferase of Finegoldia magna (strain ATCC 29328 / DSM 20472 / WAL 2508) (Peptostreptococcus magnus).